A 1052-amino-acid polypeptide reads, in one-letter code: Membrane-bound transcription factor site-1 protease (1052 aa).

The first 17 residues, 1–17 (MKLINIWLLLLVVLLCG), serve as a signal peptide directing secretion. Residues 18-186 (KKHLGDRLGK…TGRHSSRRLL (169 aa)) constitute a propeptide that is removed on maturation. A glycan (N-linked (GlcNAc...) asparagine) is linked at Asn148. A Phosphoserine modification is found at Ser168. Topologically, residues 187-999 (RAIPRQVAQT…MPGRYNQEVG (813 aa)) are lumenal. The region spanning 190 to 472 (PRQVAQTLQA…HGKLDLLRAY (283 aa)) is the Peptidase S8 domain. Asp218 serves as the catalytic Charge relay system. Asn236 carries an N-linked (GlcNAc...) asparagine glycan. His249 serves as the catalytic Charge relay system. A glycan (N-linked (GlcNAc...) asparagine) is linked at Asn305. Ser414 functions as the Charge relay system in the catalytic mechanism. N-linked (GlcNAc...) asparagine glycans are attached at residues Asn515 and Asn728. Residues 877–887 (PSLSHSGNRQR) are compositionally biased toward polar residues. The segment at 877-900 (PSLSHSGNRQRPPSGAGLAPPERM) is disordered. A glycan (N-linked (GlcNAc...) asparagine) is linked at Asn939. Residues 1000-1022 (QTIPVFAFLGAMVALAFFVVQIS) form a helical membrane-spanning segment. Over 1023-1052 (KAKSRPKRRRPRAKRPQLTQQTHPPRTPSV) the chain is Cytoplasmic. A compositionally biased stretch (basic residues) spans 1025 to 1037 (KSRPKRRRPRAKR). The interval 1025-1052 (KSRPKRRRPRAKRPQLTQQTHPPRTPSV) is disordered.

The protein belongs to the peptidase S8 family. It depends on Ca(2+) as a cofactor. Post-translationally, the 148 kDa zymogen is processed progressively into two membrane-bound 120 and 106 kDa forms in the endoplasmic reticulum, and late into a secreted 98 kDa form. The propeptide is autocatalytically removed through an intramolecular cleavage after Leu-186. Further cleavage generates 14, 10, and 8 kDa intermediates.

It is found in the endoplasmic reticulum membrane. It localises to the golgi apparatus membrane. It carries out the reaction Processes precursors containing basic and hydrophobic/aliphatic residues at P4 and P2, respectively, with a relatively relaxed acceptance of amino acids at P1 and P3.. Its activity is regulated as follows. Inhibited by divalent copper and zinc ions, but not by nickel or cobalt. Inhibited by its prosegment, but not smaller fragments. Inhibited by 4-(2-aminoethyl)benzenesulfonyl fluoride (AEBSF), a serine protease inhibitor. Serine protease that cleaves after hydrophobic or small residues, provided that Arg or Lys is in position P4: known substrates include SREBF1/SREBP1, SREBF2/SREBP2, BDNF, GNPTAB, ATF6, ATF6B and FAM20C. Cleaves substrates after Arg-Ser-Val-Leu (SREBP2), Arg-His-Leu-Leu (ATF6), Arg-Gly-Leu-Thr (BDNF) and its own propeptide after Arg-Arg-Leu-Leu. Catalyzes the first step in the proteolytic activation of the sterol regulatory element-binding proteins (SREBPs) SREBF1/SREBP1 and SREBF2/SREBP2. Also mediates the first step in the proteolytic activation of the cyclic AMP-dependent transcription factor ATF-6 (ATF6 and ATF6B). Mediates the protein cleavage of GNPTAB into subunit alpha and beta, thereby participating in biogenesis of lysosomes. Cleaves the propeptide from FAM20C which is required for FAM20C secretion from the Golgi apparatus membrane and for enhancement of FAM20C kinase activity, promoting osteoblast differentiation and biomineralization. Involved in the regulation of M6P-dependent Golgi-to-lysosome trafficking of lysosomal enzymes. It is required for the activation of CREB3L2/BBF2H7, a transcriptional activator of MIA3/TANGO and other genes controlling mega vesicle formation. Therefore, it plays a key role in the regulation of mega vesicle-mediated collagen trafficking. In astrocytes and osteoblasts, upon DNA damage and ER stress, mediates the first step of the regulated intramembrane proteolytic activation of the transcription factor CREB3L1, leading to the inhibition of cell-cycle progression. This chain is Membrane-bound transcription factor site-1 protease, found in Cricetulus griseus (Chinese hamster).